A 350-amino-acid chain; its full sequence is tRNA uridine(34) hydroxylase (350 aa).

Positions 146–240 (DDPDAVFIDM…YARRAREQGL (95 aa)) constitute a Rhodanese domain. Residue Cys-200 is the Cysteine persulfide intermediate of the active site. The span at 319–328 (RRRRAGRENG) shows a compositional bias: basic and acidic residues. A disordered region spans residues 319-350 (RRRRAGRENGNKIFNKSRGRLNSKLSIPDPAE).

This sequence belongs to the TrhO family.

The catalysed reaction is uridine(34) in tRNA + AH2 + O2 = 5-hydroxyuridine(34) in tRNA + A + H2O. Its function is as follows. Catalyzes oxygen-dependent 5-hydroxyuridine (ho5U) modification at position 34 in tRNAs. This chain is tRNA uridine(34) hydroxylase, found in Salmonella gallinarum (strain 287/91 / NCTC 13346).